A 441-amino-acid polypeptide reads, in one-letter code: Protein C-ets-1 (441 aa).

N6-acetyllysine; alternate occurs at positions 8 and 15. Glycyl lysine isopeptide (Lys-Gly) (interchain with G-Cter in SUMO2); alternate cross-links involve residues lysine 8 and lysine 15. Threonine 38 carries the phosphothreonine; by MAPK modification. Residues 51-136 (ATFSGFTKEQ…EHLEILQKED (86 aa)) form the PNT domain. The tract at residues 130-243 (EILQKEDVKP…DNMCMGRTSR (114 aa)) is activation domain; required for transcription activation. A Glycyl lysine isopeptide (Lys-Gly) (interchain with G-Cter in SUMO2) cross-link involves residue lysine 138. Position 223 is a phosphotyrosine (tyrosine 223). Lysine 227 participates in a covalent cross-link: Glycyl lysine isopeptide (Lys-Gly) (interchain with G-Cter in SUMO). Phosphoserine is present on residues serine 251 and serine 254. Threonine 265 carries the post-translational modification Phosphothreonine. A phosphoserine mark is found at serine 267, serine 270, serine 282, and serine 285. Residues 304 to 312 (FKDYVRDRA) form a helix HI-1 region. The residue at position 305 (lysine 305) is an N6-acetyllysine. The interval 323–330 (AAALAGYT) is helix HI-2. The segment at residues 335–415 (IQLWQFLLEL…AGKRYVYRFV (81 aa)) is a DNA-binding region (ETS). The tract at residues 418–422 (LQSLL) is helix H4. The segment at 426–432 (PEELHAM) is helix H5.

Belongs to the ETS family. As to quaternary structure, binds DNA as a homodimer; homodimerization is required for transcription activation. Interacts with MAF and MAFB. Interacts with PAX5; the interaction alters DNA-binding properties. Interacts with DAXX. Interacts with UBE2I. Interacts with SP100; the interaction is direct and modulates ETS1 transcriptional activity. In terms of processing, sumoylated on Lys-15 and Lys-227, preferentially with SUMO2; which inhibits transcriptional activity. Post-translationally, ubiquitinated; which induces proteasomal degradation. Phosphorylation at Ser-251, Ser-282 and Ser-285 by CaMK2/CaMKII in response to calcium signaling decreases affinity for DNA: an increasing number of phosphoserines causes DNA-binding to become progressively weaker. Highly expressed within lymphoid cells. Isoforms c-ETS-1A and Ets-1 p27 are both detected in all fetal tissues tested, but vary with tissue type in adult tissues. None is detected in brain or kidney.

The protein localises to the nucleus. The protein resides in the cytoplasm. Autoinhibited by a module composed of four alpha helices (HI-1, HI-2, H4, and H5) that flank the DNA-binding ETS domain, reducing the affinity for DNA. Phosphorylation by CaMK2/CaMKII in response to calcium signaling decreases affinity for DNA. Functionally, transcription factor. Directly controls the expression of cytokine and chemokine genes in a wide variety of different cellular contexts. May control the differentiation, survival and proliferation of lymphoid cells. May also regulate angiogenesis through regulation of expression of genes controlling endothelial cell migration and invasion. Acts as a dominant-negative for isoform c-ETS-1A. The sequence is that of Protein C-ets-1 (ETS1) from Homo sapiens (Human).